The sequence spans 180 residues: Cytochrome c oxidase assembly protein CtaG (180 aa).

The Cytoplasmic segment spans residues 1 to 8; that stretch reads MSKKSNKS. Residues 9 to 29 form a helical; Signal-anchor for type II membrane protein membrane-spanning segment; the sequence is LAFSLLGLIVSMVLLSFAAVP. Over 30–180 the chain is Periplasmic; it reads LYNLFCKVTG…SFFKVRDVKK (151 aa).

It belongs to the COX11/CtaG family.

The protein resides in the cell inner membrane. In terms of biological role, exerts its effect at some terminal stage of cytochrome c oxidase synthesis, probably by being involved in the insertion of the copper B into subunit I. This chain is Cytochrome c oxidase assembly protein CtaG, found in Rickettsia bellii (strain RML369-C).